Consider the following 139-residue polypeptide: Protein cornichon homolog 4 (139 aa).

Helical transmembrane passes span 5–25 (VFVF…YFII), 57–77 (LVTV…NLPV), and 118–138 (LGFH…ALIN).

The protein belongs to the cornichon family. Interacts with Sec23/24 complex components SEC24B and SEC24D. Interacts with CCR5. Interacts with ADRB2 in the early secretory pathway.

It localises to the membrane. The protein localises to the endoplasmic reticulum. The protein resides in the endoplasmic reticulum-Golgi intermediate compartment. Functionally, involved in G protein-coupled receptors (GPCRs) trafficking from the endoplasmic reticulum to the cell surface; it promotes the exit of GPCRs from the early secretory pathway, likely through interaction with the COPII machinery. In Bos taurus (Bovine), this protein is Protein cornichon homolog 4 (CNIH4).